The chain runs to 366 residues: UDP-N-acetylenolpyruvoylglucosamine reductase (366 aa).

Positions 29-203 (VGPVARTLVT…LEVEFALDAS (175 aa)) constitute an FAD-binding PCMH-type domain. Residue R177 is part of the active site. S258 acts as the Proton donor in catalysis. The active site involves E358.

The protein belongs to the MurB family. FAD serves as cofactor.

It localises to the cytoplasm. The enzyme catalyses UDP-N-acetyl-alpha-D-muramate + NADP(+) = UDP-N-acetyl-3-O-(1-carboxyvinyl)-alpha-D-glucosamine + NADPH + H(+). The protein operates within cell wall biogenesis; peptidoglycan biosynthesis. Functionally, cell wall formation. The polypeptide is UDP-N-acetylenolpyruvoylglucosamine reductase (Mycobacterium marinum (strain ATCC BAA-535 / M)).